A 377-amino-acid polypeptide reads, in one-letter code: Adenosine 3'-phospho 5'-phosphosulfate transporter 2 (377 aa).

Helical transmembrane passes span 50–70, 77–97, 115–135, 138–158, 164–184, 195–215, 228–248, 266–286, 293–313, and 317–337; these read LCCGGVFALYLVYGYMQELIF, PYGWYLTLVQFAYYTAFGYIE, ALLAFLTLGTMGLSNSSVGYL, PTQVIFKCCKLIPVLIGSVLI, GPMDFFAATAMCLGLILFTLA, FGVFLISLALLCDAAIGNVQE, VVIYSYGIGFVYLAVIMLLSG, GYAFLFSLTGYLGIQIVLTLV, LAATVTTARKAVTIALSFVFF, and FTIQYLWSGLIVVFGIYLNVY.

Belongs to the nucleotide-sugar transporter family. SLC35B subfamily.

It localises to the golgi apparatus membrane. Its function is as follows. Mediates the transport of adenosine 3'-phospho 5'-phosphosulfate (PAPS), from cytosol into Golgi. PAPS is a universal sulfuryl donor for sulfation events that take place in the Golgi. Essential for viability. Involved in glycosaminoglycan synthesis and the subsequent signaling. May be involved in hh and dpp signaling by controlling the sulfation of heparan sulfate (HS). The chain is Adenosine 3'-phospho 5'-phosphosulfate transporter 2 from Anopheles gambiae (African malaria mosquito).